Reading from the N-terminus, the 136-residue chain is Small ribosomal subunit protein eS19 (136 aa).

At Lys-23 the chain carries N6-acetyllysine. Omega-N-methylarginine is present on Arg-67. An N6-acetyllysine mark is found at Lys-111 and Lys-115. Residues 116-136 (DQDGGRKLTPQGQRDLDRIAG) form a disordered region.

The protein belongs to the eukaryotic ribosomal protein eS19 family. Component of the small ribosomal subunit. Part of the small subunit (SSU) processome, composed of more than 70 proteins and the RNA chaperone small nucleolar RNA (snoRNA) U3. Interacts with RPS19BP1; the interaction is direct and mediates the integration of RPS19 in state post-A1. Interacts with RPS19BP1.

The protein resides in the cytoplasm. The protein localises to the nucleus. Its subcellular location is the nucleolus. Component of the small ribosomal subunit. The ribosome is a large ribonucleoprotein complex responsible for the synthesis of proteins in the cell. Required for pre-rRNA processing and maturation of 40S ribosomal subunits. Part of the small subunit (SSU) processome, first precursor of the small eukaryotic ribosomal subunit. During the assembly of the SSU processome in the nucleolus, many ribosome biogenesis factors, an RNA chaperone and ribosomal proteins associate with the nascent pre-rRNA and work in concert to generate RNA folding, modifications, rearrangements and cleavage as well as targeted degradation of pre-ribosomal RNA by the RNA exosome. This Sus scrofa (Pig) protein is Small ribosomal subunit protein eS19 (RPS19).